Consider the following 273-residue polypeptide: 2-dehydro-3-deoxyphosphooctonate aldolase (273 aa).

Belongs to the KdsA family.

It is found in the cytoplasm. It catalyses the reaction D-arabinose 5-phosphate + phosphoenolpyruvate + H2O = 3-deoxy-alpha-D-manno-2-octulosonate-8-phosphate + phosphate. Its pathway is carbohydrate biosynthesis; 3-deoxy-D-manno-octulosonate biosynthesis; 3-deoxy-D-manno-octulosonate from D-ribulose 5-phosphate: step 2/3. It participates in bacterial outer membrane biogenesis; lipopolysaccharide biosynthesis. This chain is 2-dehydro-3-deoxyphosphooctonate aldolase, found in Nitratidesulfovibrio vulgaris (strain ATCC 29579 / DSM 644 / CCUG 34227 / NCIMB 8303 / VKM B-1760 / Hildenborough) (Desulfovibrio vulgaris).